The primary structure comprises 297 residues: Retroviral cyclin (297 aa).

A Cyclin N-terminal domain is found at 21-113 (PVYWKELLNW…KPSLLLTETM (93 aa)). The transcription activation domain stretch occupies residues 21-113 (PVYWKELLNW…KPSLLLTETM (93 aa)). Residues 222–270 (QINLDFAEAEQREAAERRALLEREREQQLQEARERLDDVMAVLEAEVAI) adopt a coiled-coil conformation.

It belongs to the cyclin family. As to quaternary structure, interacts (via transcription activation domain) with host TAF9 in vitro. Interacts with host CDK3 and CDK8.

The protein resides in the host nucleus. Its function is as follows. Transforming protein which induces the development of dermal sarcomas. Induces positive and negative regulation of transcription from host and viral promoters by interacting with various cellular factors involved in protein transcription regulation. The chain is Retroviral cyclin (orfA) from Sander vitreus (Walleye).